A 384-amino-acid chain; its full sequence is F-box/kelch-repeat protein At1g64840 (384 aa).

The F-box domain maps to Pro3–Tyr51. Kelch repeat units follow at residues Pro87–Phe137 and Asn259–Ala309.

The sequence is that of F-box/kelch-repeat protein At1g64840 from Arabidopsis thaliana (Mouse-ear cress).